Consider the following 289-residue polypeptide: BTB/POZ domain-containing protein KCTD7 (289 aa).

Positions 1–10 (MVVVTGQSKG) are enriched in polar residues. The disordered stretch occupies residues 1–35 (MVVVTGQSKGSGDPDEAMSSSDAEDDFQEPATPTA). Residues 51-149 (EVVPLNVGGM…HLEDVQPLKG (99 aa)) enclose the BTB domain.

It localises to the cell membrane. Its subcellular location is the cytoplasm. It is found in the cytosol. Its function is as follows. May be involved in the control of excitability of cortical neurons. The sequence is that of BTB/POZ domain-containing protein KCTD7 (KCTD7) from Gallus gallus (Chicken).